The following is a 155-amino-acid chain: Large ribosomal subunit protein eL24 (155 aa).

The segment covering 98-129 has biased composition (basic and acidic residues); that stretch reads PEVRKAKRDDKAKADKEKKKADKAARKAEKAK. The disordered stretch occupies residues 98–155; it reads PEVRKAKRDDKAKADKEKKKADKAARKAEKAKLAAAQGSKVSKQQAKGAFQKVAATSR.

This sequence belongs to the eukaryotic ribosomal protein eL24 family.

This Candida glabrata (strain ATCC 2001 / BCRC 20586 / JCM 3761 / NBRC 0622 / NRRL Y-65 / CBS 138) (Yeast) protein is Large ribosomal subunit protein eL24 (RPL24).